A 242-amino-acid chain; its full sequence is NH(3)-dependent NAD(+) synthetase (242 aa).

27 to 34 provides a ligand contact to ATP; it reads GISGGIDS. Aspartate 33 contributes to the Mg(2+) binding site. A deamido-NAD(+)-binding site is contributed by arginine 109. Threonine 129 contributes to the ATP binding site. Residue glutamate 134 coordinates Mg(2+). 2 residues coordinate deamido-NAD(+): lysine 142 and aspartate 149. 2 residues coordinate ATP: lysine 158 and threonine 180. Residue 231 to 232 participates in deamido-NAD(+) binding; it reads HK.

The protein belongs to the NAD synthetase family. In terms of assembly, homodimer.

The catalysed reaction is deamido-NAD(+) + NH4(+) + ATP = AMP + diphosphate + NAD(+) + H(+). It functions in the pathway cofactor biosynthesis; NAD(+) biosynthesis; NAD(+) from deamido-NAD(+) (ammonia route): step 1/1. Functionally, catalyzes the ATP-dependent amidation of deamido-NAD to form NAD. Uses ammonia as a nitrogen source. The polypeptide is NH(3)-dependent NAD(+) synthetase (Thermoplasma volcanium (strain ATCC 51530 / DSM 4299 / JCM 9571 / NBRC 15438 / GSS1)).